Reading from the N-terminus, the 327-residue chain is MGSQDVKGDSYESVYNKILDMQSEPGGANDLRTNRQRSFNIENRYVEKALTQPGVVTKMQDAWTNWTKTNKEEGTPYNMSYSCVLLNVIPTVPMGYAGTVEVSLLDSGLSPLENVIPDQTQMMELGKGPHVMCFFMHYSIPLNDKGRAVKLAFKIDAEMASKGMSVMNVYSYWTQRQGHLSAYSEPQRSTISKLMLGYDKSLKMKTRNDVRRFVGRSLSLHNQEQSVPALLPGQINVMKENVPLYRKESVIDLTREEREKAAQLEMLRKTREVHTQRSAEEMKRRQAELAKDTQRKLAEEAKAVTEKRKNMAGVNSSNIKFGNFDSV.

A coiled-coil region spans residues 252–311 (DLTREEREKAAQLEMLRKTREVHTQRSAEEMKRRQAELAKDTQRKLAEEAKAVTEKRKNM). Disordered stretches follow at residues 271–294 (REVH…KDTQ) and 307–327 (KRKN…FDSV). Residues 313–327 (GVNSSNIKFGNFDSV) are compositionally biased toward polar residues.

The protein resides in the host cell wall. Its subcellular location is the host cytoplasm. In terms of biological role, transports viral genome to neighboring plant cells directly through plasmosdesmata, without any budding. The movement protein allows efficient cell to cell propagation, by bypassing the host cell wall barrier. The polypeptide is Movement protein (Hordeum vulgare (Barley)).